The chain runs to 301 residues: Mitochondrial ornithine transporter 1 (301 aa).

6 helical membrane-spanning segments follow: residues 5 to 25 (PAIQ…ACVL), 68 to 88 (SPAL…YGFC), 110 to 130 (AAAG…TELV), 168 to 188 (GFYH…FFFF), 207 to 227 (LGPV…WLAV), and 237 to 257 (IQVL…LSIV). Solcar repeat units lie at residues 7-91 (IQAA…CQQV), 104-197 (LSDL…SRSF), and 207-293 (LGPV…SRKL).

The protein belongs to the mitochondrial carrier (TC 2.A.29) family. In terms of tissue distribution, widely expressed, with highest levels in the liver, testis and kidney. In the brain, expressed at high levels in the hypothalamus.

It localises to the mitochondrion inner membrane. The protein resides in the mitochondrion membrane. It catalyses the reaction L-citrulline(in) + L-ornithine(out) + H(+)(in) = L-citrulline(out) + L-ornithine(in) + H(+)(out). The catalysed reaction is L-ornithine(in) + L-arginine(out) = L-ornithine(out) + L-arginine(in). It carries out the reaction L-ornithine(out) + L-lysine(in) = L-ornithine(in) + L-lysine(out). The enzyme catalyses L-lysine(out) + H(+)(in) = L-lysine(in) + H(+)(out). It catalyses the reaction L-ornithine(out) + H(+)(in) = L-ornithine(in) + H(+)(out). Its activity is regulated as follows. Inhibited by pyridoxal 5'-phosphate as well as by mercurials (mersalyl, p-chloromercuribenzene sulfonate, and mercuric chloride), N-ethylmaleimide and spermine. In terms of biological role, mitochondrial ornithine-citrulline antiporter. Catalyzes the exchange between cytosolic ornithine and mitochondrial citrulline plus an H(+), the proton compensates the positive charge of ornithine thus leading to an electroneutral transport. Plays a crucial role in the urea cycle, by connecting the cytosolic and the intramitochondrial reactions of the urea cycle. Lysine and arginine are also transported by the antiport mechanism. In addition, catalyzes an electroneutral exchange of ornithine or lysine for H(+), a reaction driven by the pH gradient across the inner membrane. The protein is Mitochondrial ornithine transporter 1 of Mus musculus (Mouse).